Reading from the N-terminus, the 297-residue chain is Ribosomal protein L11 methyltransferase (297 aa).

Residues Thr-152, Gly-173, Asp-195, and Asn-234 each contribute to the S-adenosyl-L-methionine site.

It belongs to the methyltransferase superfamily. PrmA family.

It localises to the cytoplasm. It carries out the reaction L-lysyl-[protein] + 3 S-adenosyl-L-methionine = N(6),N(6),N(6)-trimethyl-L-lysyl-[protein] + 3 S-adenosyl-L-homocysteine + 3 H(+). Its function is as follows. Methylates ribosomal protein L11. This is Ribosomal protein L11 methyltransferase from Cupriavidus pinatubonensis (strain JMP 134 / LMG 1197) (Cupriavidus necator (strain JMP 134)).